The chain runs to 356 residues: Protein-glutamate methylesterase/protein-glutamine glutaminase 2 (356 aa).

Residues 6–123 enclose the Response regulatory domain; that stretch reads KVLIVDDSAL…KQFLEESSIR (118 aa). The residue at position 57 (Asp57) is a 4-aspartylphosphate. Residues 165-356 enclose the CheB-type methylesterase domain; sequence VQRTEKVVVV…AAAIVKACNS (192 aa). Catalysis depends on residues Ser177, His203, and Asp299.

The protein belongs to the CheB family. Post-translationally, phosphorylated by CheA. Phosphorylation of the N-terminal regulatory domain activates the methylesterase activity.

The protein resides in the cytoplasm. It carries out the reaction [protein]-L-glutamate 5-O-methyl ester + H2O = L-glutamyl-[protein] + methanol + H(+). It catalyses the reaction L-glutaminyl-[protein] + H2O = L-glutamyl-[protein] + NH4(+). Its function is as follows. Involved in chemotaxis. Part of a chemotaxis signal transduction system that modulates chemotaxis in response to various stimuli. Catalyzes the demethylation of specific methylglutamate residues introduced into the chemoreceptors (methyl-accepting chemotaxis proteins or MCP) by CheR. Also mediates the irreversible deamidation of specific glutamine residues to glutamic acid. This Oleidesulfovibrio alaskensis (strain ATCC BAA-1058 / DSM 17464 / G20) (Desulfovibrio alaskensis) protein is Protein-glutamate methylesterase/protein-glutamine glutaminase 2.